The chain runs to 256 residues: MALAKRIIPCLDVDNGRVVKGVKFENIRDAGDPVEIARRYDEQGADEITFLDITASVDGRDTTLHTVERMASQVFIPLTVGGGVRTVQDIRNLLNAGADKVSINTAAVFNPEFVGEAADRFGSQCIVVAIDAKKVSGPGEAPRWEIFTHGGRKPTGLDAVEWAKKMEGLGAGEILLTSMDQDGMKNGFDLGVTRAISDALGIPVIASGGVGNLQHLADGILEGHASAVLAASIFHFGEYTVPEAKAYMASRGIVVR.

Active-site residues include Asp12 and Asp131.

The protein belongs to the HisA/HisF family. In terms of assembly, heterodimer of HisH and HisF.

It localises to the cytoplasm. It carries out the reaction 5-[(5-phospho-1-deoxy-D-ribulos-1-ylimino)methylamino]-1-(5-phospho-beta-D-ribosyl)imidazole-4-carboxamide + L-glutamine = D-erythro-1-(imidazol-4-yl)glycerol 3-phosphate + 5-amino-1-(5-phospho-beta-D-ribosyl)imidazole-4-carboxamide + L-glutamate + H(+). It participates in amino-acid biosynthesis; L-histidine biosynthesis; L-histidine from 5-phospho-alpha-D-ribose 1-diphosphate: step 5/9. In terms of biological role, IGPS catalyzes the conversion of PRFAR and glutamine to IGP, AICAR and glutamate. The HisF subunit catalyzes the cyclization activity that produces IGP and AICAR from PRFAR using the ammonia provided by the HisH subunit. In Pseudomonas putida (strain ATCC 700007 / DSM 6899 / JCM 31910 / BCRC 17059 / LMG 24140 / F1), this protein is Imidazole glycerol phosphate synthase subunit HisF.